The chain runs to 105 residues: Cell division protein FtsB (105 aa).

Residues 1–3 (MGK) lie on the Cytoplasmic side of the membrane. The helical transmembrane segment at 4–21 (LTLLLLVLLGWLQYSLWL) threads the bilayer. Residues 22-105 (GKNGVHDLVR…PAAPATQDNQ (84 aa)) are Periplasmic-facing. Positions 28-62 (DLVRVESDVAAQQSNNAQLKARNDQLFAEIDDLNG) form a coiled coil.

This sequence belongs to the FtsB family. In terms of assembly, part of a complex composed of FtsB, FtsL and FtsQ.

Its subcellular location is the cell inner membrane. In terms of biological role, essential cell division protein. May link together the upstream cell division proteins, which are predominantly cytoplasmic, with the downstream cell division proteins, which are predominantly periplasmic. In Sodalis glossinidius (strain morsitans), this protein is Cell division protein FtsB.